The sequence spans 249 residues: uncharacterized protein (249 aa).

Residues 30–65 are a coiled coil; that stretch reads KVDKLKKLEIKKLEDQKKLKEQEEKHRLTLIRLANA. The segment at 66-97 is disordered; the sequence is PPQTNSINNNNNNNNNIKTNRPPLIYGEDKDK.

This is an uncharacterized protein from Dictyostelium discoideum (Social amoeba).